The primary structure comprises 1264 residues: Protein fantom (1264 aa).

4 coiled-coil regions span residues 64 to 143 (LKQH…LQVQ), 196 to 268 (YSNS…NVET), 299 to 454 (LRIS…ESDI), and 488 to 555 (NKDL…VHLL). C2 domains lie at 577-714 (KQYK…FCTT) and 773-897 (AATT…SGIF). 2 disordered regions span residues 979 to 1018 (DTISHPSPETSPPPKDIKDSSPEVGPKPENGLSAVAYPSK) and 1047 to 1093 (QLAS…NTKQ). Positions 1056–1080 (SEDETEITEELEPEDEDRSASDSDD) are enriched in acidic residues.

It belongs to the RPGRIP1 family. In terms of assembly, interacts with NPHP4 and NPHP1; NPHP1, NPHP4 and RPGRIP1L are proposed to form a functional NPHP1-4-8 module localized to cell-cell contacts and the ciliary transition zone; NPHP4 mediates the interaction between NPHP1 and RPGRIP1L. Interacts with IQCB1; the interaction likely requires additional interactors. Interacts with TBXA2R (via C-terminus), RPGR, NEK4. Interacts with NPHP4, INVS and DVL2; proposed to form a complex involved in DVL2 stabilization. Interacts with PSMD2. In terms of tissue distribution, ubiquitously expressed. Not found in heart and skin.

Its subcellular location is the cytoplasm. It is found in the cytoskeleton. The protein resides in the cilium basal body. It localises to the cilium axoneme. The protein localises to the microtubule organizing center. Its subcellular location is the centrosome. It is found in the cell junction. The protein resides in the tight junction. In terms of biological role, negatively regulates signaling through the G-protein coupled thromboxane A2 receptor (TBXA2R). May be involved in mechanisms like programmed cell death, craniofacial development, patterning of the limbs, and formation of the left-right axis. Involved in the organization of apical junctions; the function is proposed to implicate a NPHP1-4-8 module. Does not seem to be strictly required for ciliogenesis. Involved in establishment of planar cell polarity such as in cochlear sensory epithelium and is proposed to implicate stabilization of disheveled proteins. Involved in regulation of proteasomal activity at the primary cilium probably implicating association with PSDM2. This is Protein fantom (Rpgrip1l) from Mus musculus (Mouse).